Reading from the N-terminus, the 229-residue chain is Peptidase E (229 aa).

Residues Ser120, Asp135, and His157 each act as charge relay system in the active site.

It belongs to the peptidase S51 family.

Its subcellular location is the cytoplasm. It carries out the reaction Dipeptidase E catalyzes the hydrolysis of dipeptides Asp-|-Xaa. It does not act on peptides with N-terminal Glu, Asn or Gln, nor does it cleave isoaspartyl peptides.. Functionally, hydrolyzes dipeptides containing N-terminal aspartate residues. May play a role in allowing the cell to use peptide aspartate to spare carbon otherwise required for the synthesis of the aspartate family of amino acids. The protein is Peptidase E of Salmonella typhi.